Consider the following 366-residue polypeptide: 3-dehydroquinate synthase (366 aa).

NAD(+) is bound by residues 75-80, 109-113, 133-134, Lys-146, Lys-155, and 173-176; these read DGEQYK, GVIGD, TT, and CLST. The Zn(2+) site is built by Glu-188, His-251, and His-268.

This sequence belongs to the sugar phosphate cyclases superfamily. Dehydroquinate synthase family. NAD(+) serves as cofactor. Co(2+) is required as a cofactor. The cofactor is Zn(2+).

Its subcellular location is the cytoplasm. The enzyme catalyses 7-phospho-2-dehydro-3-deoxy-D-arabino-heptonate = 3-dehydroquinate + phosphate. Its pathway is metabolic intermediate biosynthesis; chorismate biosynthesis; chorismate from D-erythrose 4-phosphate and phosphoenolpyruvate: step 2/7. Its function is as follows. Catalyzes the conversion of 3-deoxy-D-arabino-heptulosonate 7-phosphate (DAHP) to dehydroquinate (DHQ). This is 3-dehydroquinate synthase from Vibrio parahaemolyticus serotype O3:K6 (strain RIMD 2210633).